The following is a 52-amino-acid chain: Creatine kinase B-type (52 aa).

The region spanning 1–52 (AKVLTLDLYKKLRDKSTPSGFTLDDIIQNEHLGYVLTCPSNLGTXLRAXVHV) is the Phosphagen kinase C-terminal domain. Positions 1–52 (AKVLTLDLYKKLRDKSTPSGFTLDDIIQNEHLGYVLTCPSNLGTXLRAXVHV) constitute a Phosphagen kinase N-terminal domain. Residues Arg-13 and Arg-47 each contribute to the ATP site.

Belongs to the ATP:guanido phosphotransferase family. In terms of assembly, dimer of identical or non-identical chains, which can be either B (brain type) or M (muscle type). With MM being the major form in skeletal muscle and myocardium, MB existing in myocardium, and BB existing in many tissues, especially brain. In terms of tissue distribution, expressed in rectal gland, brain, skeletal muscle (at protein level).

The protein localises to the cytoplasm. The protein resides in the cytosol. It is found in the mitochondrion. It localises to the basal cell membrane. It carries out the reaction creatine + ATP = N-phosphocreatine + ADP + H(+). In terms of biological role, reversibly catalyzes the transfer of phosphate between ATP and various phosphogens (e.g. creatine phosphate). Creatine kinase isoenzymes play a central role in energy transduction in tissues with large, fluctuating energy demands, such as skeletal muscle, heart, brain and spermatozoa. The chain is Creatine kinase B-type from Squalus acanthias (Spiny dogfish).